A 98-amino-acid chain; its full sequence is Flagellar hook-basal body complex protein FliE (98 aa).

Low complexity predominate over residues 1–23 (MNNINDLRLNNNISNTNKSQNST). The disordered stretch occupies residues 1–24 (MNNINDLRLNNNISNTNKSQNSTG).

The protein belongs to the FliE family.

It is found in the bacterial flagellum basal body. The polypeptide is Flagellar hook-basal body complex protein FliE (Campylobacter jejuni subsp. jejuni serotype O:2 (strain ATCC 700819 / NCTC 11168)).